A 2703-amino-acid chain; its full sequence is Neurogenic locus Notch protein (2703 aa).

The signal sequence occupies residues 1–52 (MQSQRSRRRSRAPNTWICFWINKMHAVASLPASLPLLLLTLAFANLPNTVRG). The Extracellular segment spans residues 53–1745 (TDTALVAASC…NGEPPANVKY (1693 aa)). EGF-like domains are found at residues 58 to 95 (VAAS…DYCE), 96 to 136 (HRNP…SLCE), 139 to 176 (VPNA…ERCE), and 177 to 215 (TKNL…DTCS). Intrachain disulfides connect Cys62–Cys73, Cys67–Cys83, Cys85–Cys94, Cys100–Cys111, Cys105–Cys124, Cys126–Cys135, Cys143–Cys154, Cys148–Cys164, Cys166–Cys175, Cys181–Cys192, Cys186–Cys203, Cys205–Cys214, Cys221–Cys232, Cys226–Cys241, Cys243–Cys252, Cys259–Cys270, Cys264–Cys279, Cys281–Cys290, Cys297–Cys308, Cys302–Cys317, Cys319–Cys328, Cys335–Cys349, Cys343–Cys358, and Cys360–Cys369. Thr72 is a glycosylation site (O-linked (Fuc...) threonine). An O-linked (Fuc...) threonine glycan is attached at Thr110. O-linked (Fuc...) threonine glycosylation is present at Thr153. An O-linked (Glc...) serine glycan is attached at Ser183. The O-linked (Fuc...) threonine glycan is linked to Thr191. O-linked (GlcNAc...) threonine glycosylation occurs at Thr210. The region spanning 217-253 (DIEECQSNPCKYGGTCVNTHGSYQCMCPTGYTGKDCD) is the EGF-like 5; calcium-binding domain. The O-linked (Glc...) serine glycan is linked to Ser223. An O-linked (Fuc...) threonine glycan is attached at Thr231. Residues 255-291 (KYKPCSPSPCQNGGICRSNGLSYECKCPKGFEGKNCE) form the EGF-like 6 domain. Residues 293-329 (NYDDCLGHLCQNGGTCIDGISDYTCRCPPNFTGRFCQ) enclose the EGF-like 7; calcium-binding domain. An O-linked (Fuc...) threonine glycan is attached at Thr307. A glycan (N-linked (GlcNAc...) asparagine) is linked at Asn322. In terms of domain architecture, EGF-like 8; calcium-binding spans 331–370 (DVDECAQRDHPVCQNGATCTNTHGSYSCICVNGWAGLDCS). Thr348 carries an O-linked (Fuc...) threonine glycan. Residue Asn371 is glycosylated (N-linked (GlcNAc...) asparagine). In terms of domain architecture, EGF-like 9; calcium-binding spans 372-408 (NTDDCKQAACFYGATCIDGVGSFYCQCTKGKTGLLCH). 8 cysteine pairs are disulfide-bonded: Cys376–Cys387, Cys381–Cys396, Cys398–Cys407, Cys413–Cys424, Cys418–Cys435, Cys437–Cys446, Cys453–Cys465, and Cys459–Cys474. Thr386 carries O-linked (Fuc...) threonine glycosylation. Residues 409–447 (LDDACTSNPCHADAICDTSPINGSYACSCATGYKGVDCS) form the EGF-like 10 domain. Ser427 carries an O-linked (Glc...) serine glycan. N-linked (GlcNAc...) asparagine glycosylation occurs at Asn430. Positions 449-486 (DIDECDQGSPCEHNGICVNTPGSYRCNCSQGFTGPRCE) constitute an EGF-like 11; calcium-binding domain. Asn475 is a glycosylation site (N-linked (GlcNAc...) asparagine). 78 disulfides stabilise this stretch: Cys476-Cys485, Cys492-Cys503, Cys497-Cys512, Cys514-Cys523, Cys530-Cys541, Cys535-Cys550, Cys552-Cys561, Cys568-Cys579, Cys573-Cys588, Cys590-Cys599, Cys606-Cys616, Cys611-Cys625, Cys627-Cys636, Cys643-Cys654, Cys648-Cys663, Cys665-Cys674, Cys681-Cys692, Cys686-Cys701, Cys703-Cys712, Cys719-Cys730, Cys724-Cys739, Cys741-Cys750, Cys757-Cys768, Cys762-Cys777, Cys779-Cys788, Cys795-Cys806, Cys800-Cys815, Cys817-Cys826, Cys833-Cys844, Cys838-Cys853, Cys855-Cys864, Cys871-Cys882, Cys876-Cys893, Cys895-Cys904, Cys911-Cys923, Cys917-Cys932, Cys934-Cys943, Cys950-Cys961, Cys955-Cys970, Cys972-Cys981, Cys988-Cys999, Cys993-Cys1008, Cys1010-Cys1019, Cys1026-Cys1037, Cys1031-Cys1046, Cys1048-Cys1057, Cys1064-Cys1075, Cys1069-Cys1084, Cys1086-Cys1095, Cys1102-Cys1113, Cys1107-Cys1122, Cys1124-Cys1133, Cys1155-Cys1160, Cys1171-Cys1180, Cys1187-Cys1198, Cys1192-Cys1207, Cys1209-Cys1218, Cys1225-Cys1236, Cys1230-Cys1245, Cys1247-Cys1256, Cys1263-Cys1274, Cys1268-Cys1283, Cys1285-Cys1294, Cys1301-Cys1314, Cys1306-Cys1323, Cys1325-Cys1334, Cys1341-Cys1352, Cys1346-Cys1361, Cys1363-Cys1372, Cys1379-Cys1389, Cys1384-Cys1400, Cys1402-Cys1411, Cys1419-Cys1430, Cys1424-Cys1439, Cys1441-Cys1450, Cys1482-Cys1505, Cys1487-Cys1500, and Cys1496-Cys1512. The O-linked (GlcNAc...) threonine glycan is linked to Thr481. The EGF-like 12; calcium-binding domain maps to 488–524 (NINECESHPCQNEGSCLDDPGTFRCVCMPGFTGTQCE). Ser494 carries O-linked (Glc...) serine glycosylation. O-linked (Fuc...) serine glycosylation is present at Ser502. An O-linked (GlcNAc...) threonine glycan is attached at Thr519. The EGF-like 13; calcium-binding domain maps to 526–562 (DIDECQSNPCLNDGTCHDKINGFKCSCALGFTGARCQ). Ser532 carries O-linked (Glc...) serine glycosylation. In terms of domain architecture, EGF-like 14; calcium-binding spans 564-600 (NIDDCQSQPCRNRGICHDSIAGYSCECPPGYTGTSCE). Residue Ser570 is glycosylated (O-linked (Glc...) serine). O-linked (GlcNAc...) threonine glycosylation is present at Thr595. In terms of domain architecture, EGF-like 15; calcium-binding spans 602-637 (NINDCDSNPCHRGKCIDDVNSFKCLCDPGYTGYICQ). A glycan (O-linked (Glc...) serine) is linked at Ser608. The 37-residue stretch at 639–675 (QINECESNPCQFDGHCQDRVGSYYCQCQAGTSGKNCE) folds into the EGF-like 16; calcium-binding domain. Ser645 is a glycosylation site (O-linked (Glc...) serine). Residues 677-713 (NVNECHSNPCNNGATCIDGINSYKCQCVPGFTGQHCE) enclose the EGF-like 17; calcium-binding domain. An O-linked (Glc...) serine glycan is attached at Ser683. O-linked (Fuc...) threonine glycosylation occurs at Thr691. The region spanning 715–751 (NVDECISSPCANNGVCIDQVNGYKCECPRGFYDAHCL) is the EGF-like 18; calcium-binding domain. Residue Ser721 is glycosylated (O-linked (Glc...) serine). One can recognise an EGF-like 19; calcium-binding domain in the interval 753-789 (DVDECASNPCVNEGRCEDGINEFICHCPPGYTGKRCE). O-linked (Glc...) serine glycosylation occurs at Ser759. In terms of domain architecture, EGF-like 20; calcium-binding spans 791 to 827 (DIDECSSNPCQHGGTCYDKLNAFSCQCMPGYTGQKCE). Ser797 carries O-linked (Glc...) serine glycosylation. Residue Thr805 is glycosylated (O-linked (Fuc...) threonine). Residue Thr822 is glycosylated (O-linked (GlcNAc...) threonine). The 37-residue stretch at 829–865 (NIDDCVTNPCGNGGTCIDKVNGYKCVCKVPFTGRDCE) folds into the EGF-like 21; calcium-binding domain. O-linked (Fuc...) threonine glycosylation occurs at Thr843. Residues 867–905 (KMDPCASNRCKNEAKCTPSSNFLDFSCTCKLGYTGRYCD) form the EGF-like 22 domain. The region spanning 907–944 (DIDECSLSSPCRNGASCLNVPGSYRCLCTKGYEGRDCA) is the EGF-like 23; calcium-binding domain. A glycan (O-linked (Fuc...) serine) is linked at Ser922. One can recognise an EGF-like 24; calcium-binding domain in the interval 946–982 (NTDDCASFPCQNGGTCLDGIGDYSCLCVDGFDGKHCE). Ser952 is a glycosylation site (O-linked (Glc...) serine). A glycan (O-linked (Fuc...) threonine) is linked at Thr960. Residues 984–1020 (DINECLSQPCQNGATCSQYVNSYTCTCPLGFSGINCQ) form the EGF-like 25 domain. A glycan (O-linked (Glc...) serine) is linked at Ser990. O-linked (Fuc...) threonine glycosylation occurs at Thr998. The EGF-like 26; calcium-binding domain maps to 1022 to 1058 (NDEDCTESSCLNGGSCIDGINGYNCSCLAGYSGANCQ). A glycan (O-linked (Fuc...) serine) is linked at Ser1036. A glycan (N-linked (GlcNAc...) asparagine) is linked at Asn1045. 3 consecutive EGF-like domains span residues 1060–1096 (KLNK…KQCS), 1098–1134 (YVDW…KLCD), and 1136–1181 (QTIS…SYCQ). The O-linked (Glc...) serine glycan is linked to Ser1066. Thr1074 carries O-linked (Fuc...) threonine glycosylation. Thr1112 carries an O-linked (Fuc...) threonine glycan. Asn1157 is a glycosylation site (N-linked (GlcNAc...) asparagine). Residues 1183–1219 (EIDECQSQPCQNGGTCRDLIGAYECQCRQGFQGQNCE) form the EGF-like 30; calcium-binding domain. The O-linked (Glc...) serine glycan is linked to Ser1189. A glycan (O-linked (Fuc...) threonine) is linked at Thr1197. Residues 1221–1257 (NIDDCAPNPCQNGGTCHDRVMNFSCSCPPGTMGIICE) enclose the EGF-like 31; calcium-binding domain. Residue Thr1235 is glycosylated (O-linked (Fuc...) threonine). N-linked (GlcNAc...) asparagine glycosylation occurs at Asn1242. Residues 1259–1295 (NKDDCKPGACHNNGSCIDRVGGFECVCQPGFVGARCE) enclose the EGF-like 32; calcium-binding domain. Asn1271 is a glycosylation site (N-linked (GlcNAc...) asparagine). A glycan (O-linked (Fuc...) serine) is linked at Ser1273. EGF-like domains are found at residues 1297-1335 (DINE…RHCE), 1337-1373 (KVDF…KNCE), 1375-1412 (SGQD…EHCE), and 1415-1451 (TLDE…KRCD). Ser1303 carries O-linked (Glc...) serine glycosylation. Ser1381 is a glycosylation site (O-linked (Glc...) serine). LNR repeat units lie at residues 1482-1521 (CDKR…PWAN), 1522-1557 (CTAN…RKLK), and 1559-1599 (CDSL…TQSP). A glycan (N-linked (GlcNAc...) asparagine) is linked at Asn1521. Disulfide bonds link Cys1522-Cys1545, Cys1527-Cys1540, Cys1536-Cys1552, Cys1559-Cys1585, Cys1567-Cys1580, and Cys1576-Cys1592. Residues Asn1594 and Asn1627 are each glycosylated (N-linked (GlcNAc...) asparagine). A helical membrane pass occupies residues 1746 to 1766 (VITGIILVIIALAFFGMVLST). The Cytoplasmic segment spans residues 1767–2703 (QRKRAHGVTW…ANKGSEAIYI (937 aa)). The disordered stretch occupies residues 1810-1850 (QSQGVGQPGAHWSDDESDMPLPKRQRSDPVSGVGLGNNGGY). ANK repeat units follow at residues 1901–1945 (CGLT…ELNA), 1950–1979 (TGET…DANC), 1983–2013 (TGRT…NLNA), 2017–2046 (DGTT…DINA), 2050–2079 (SGKT…NRDA), 2083–2112 (KDET…NREI), and 2116–2139 (MDRL…LDEH). The segment at 2172–2257 (TVISAGNGGN…LTGGVSGVPG (86 aa)) is disordered. A compositionally biased stretch (low complexity) spans 2228-2238 (KKTSAASKKAA). The segment at 2325-2328 (PPSY) is interaction with Nedd4. Disordered stretches follow at residues 2399 to 2452 (SGAG…PTSP), 2488 to 2524 (GGGG…APPQ), 2579 to 2620 (LDLN…PSSQ), and 2632 to 2703 (PSSQ…AIYI). A compositionally biased stretch (polar residues) spans 2414 to 2429 (PYSNQSPPHSVQSSLA). The residue at position 2447 (Ser2447) is a Phosphoserine. Positions 2488-2497 (GGGGGGGVGQ) are enriched in gly residues. The span at 2598–2619 (PPSIQSSMSGSSPSTNMLSPSS) shows a compositional bias: low complexity. Residues 2632–2653 (PSSQHSGGHTPQHLVQTLDSYP) show a composition bias toward polar residues. Residues 2659–2675 (SPGHWSSSSPRSNSDWS) are compositionally biased toward low complexity. Residues 2677–2687 (GVQSPAANNLY) are compositionally biased toward polar residues.

The protein belongs to the NOTCH family. As to quaternary structure, homomer. Interacts with Su(H) when activated. Interacts with Dx via its ANK repeats. Interacts with Delta via the EGF repeats and the Delta EGF repeats. Interacts with Nedd4 and Su(dx). Interacts with O-fut1; the interaction glycosylates N and transports N to early endosomes. Interacts with Akap200; the interaction stabilizes N/Notch protein levels by preventing Cbl-mediated ubiquitination and subsequent lysosomal degradation of N/Notch. Upon binding its ligands such as Delta or Serrate, it is cleaved (S2 cleavage) in its extracellular domain, close to the transmembrane domain. S2 cleavage is probably mediated by Kuz. It is then cleaved (S3 cleavage) downstream of its transmembrane domain, releasing it from the cell membrane. S3 cleavage requires Psn. Post-translationally, O-glycosylated. Three forms of O-glycosylation (O-fucosylation, O-glucosylation and O-GlcNAcylation) are detected. O-fucosylated by O-fut1 and fng in the EGF repeat domain inhibits both Serrate/Ser- and Delta/Dl-binding. O-glucosylation by rumi in the endoplasmic reticulum is necessary for correct folding and signaling. In terms of processing, ubiquitinated by various ubiquitin ligases; which promotes ligand-independent endocytosis and proteasomal degradation. Ubiquitinated by Nedd4. May also be ubiquitinated by Su(dx) and Cbl. Mono-ubiquitinated, possibly by dx/deltex; this may be involved in the ESCRT-III mediated targeting to multivesicular bodies.

The protein resides in the cell membrane. It is found in the endosome. Its subcellular location is the multivesicular body. It localises to the nucleus. Essential signaling protein which has a major role in many developmental processes. Functions as a receptor for membrane-bound ligands Delta and Serrate to regulate cell-fate determination. Upon ligand activation, and releasing from the cell membrane, the Notch intracellular domain (NICD) forms a transcriptional activator complex with Su(H) (Suppressor of hairless) and activates genes of the E(spl) complex. Regulates oogenesis, the differentiation of the ectoderm and the development of the central and peripheral nervous system, eye, wing disk, muscles and segmental appendages such as antennae and legs, through lateral inhibition or induction. Regulates neuroblast self-renewal, identity and proliferation through the regulation of bHLH-O proteins; in larval brains, involved in the maintenance of type II neuroblast self-renewal and identity by suppressing erm expression together with pnt; might also regulate dpn expression through the activation of the transcriptional regulator Su(H). Targeted for ESCRT-mediated endosomal sequestration and lysosomal degradation by various E3 ubiquitin ligases to regulate the Notch signaling pathway. Can undergo ligand-dependent and non-canonical ligand-independent activation. Ligand-independent activation is dependent on endosome acidification and probably occurs in late endosomes or lysosome. Ectopic ligand-independent activation occurs when disruption of the endolysosomal pathway, particularly of the ESCRT-III complex, prevents sequestration of the receptor in intraluminal vesicles of multivesicular bodies. In Drosophila melanogaster (Fruit fly), this protein is Neurogenic locus Notch protein.